The sequence spans 404 residues: Formate-dependent phosphoribosylglycinamide formyltransferase (404 aa).

N(1)-(5-phospho-beta-D-ribosyl)glycinamide is bound by residues 25–26 (EL) and Glu85. ATP contacts are provided by residues Arg118, Lys159, 164–169 (SSGKGQ), 199–202 (EGFI), and Glu207. Residues 123-318 (RLAAEELGLP…EFELHARAIL (196 aa)) form the ATP-grasp domain. Residues Glu277 and Glu289 each contribute to the Mg(2+) site. N(1)-(5-phospho-beta-D-ribosyl)glycinamide is bound by residues Asp296, Lys365, and 372-373 (RR). The segment at 384–404 (TDEARSRAKQAAAAVRPVSAK) is disordered. Over residues 392 to 404 (KQAAAAVRPVSAK) the composition is skewed to low complexity.

This sequence belongs to the PurK/PurT family. Homodimer.

It catalyses the reaction N(1)-(5-phospho-beta-D-ribosyl)glycinamide + formate + ATP = N(2)-formyl-N(1)-(5-phospho-beta-D-ribosyl)glycinamide + ADP + phosphate + H(+). The protein operates within purine metabolism; IMP biosynthesis via de novo pathway; N(2)-formyl-N(1)-(5-phospho-D-ribosyl)glycinamide from N(1)-(5-phospho-D-ribosyl)glycinamide (formate route): step 1/1. Functionally, involved in the de novo purine biosynthesis. Catalyzes the transfer of formate to 5-phospho-ribosyl-glycinamide (GAR), producing 5-phospho-ribosyl-N-formylglycinamide (FGAR). Formate is provided by PurU via hydrolysis of 10-formyl-tetrahydrofolate. This chain is Formate-dependent phosphoribosylglycinamide formyltransferase, found in Paraburkholderia xenovorans (strain LB400).